A 246-amino-acid chain; its full sequence is 3-deoxy-manno-octulosonate cytidylyltransferase (246 aa).

Belongs to the KdsB family.

The protein localises to the cytoplasm. It catalyses the reaction 3-deoxy-alpha-D-manno-oct-2-ulosonate + CTP = CMP-3-deoxy-beta-D-manno-octulosonate + diphosphate. Its pathway is nucleotide-sugar biosynthesis; CMP-3-deoxy-D-manno-octulosonate biosynthesis; CMP-3-deoxy-D-manno-octulosonate from 3-deoxy-D-manno-octulosonate and CTP: step 1/1. The protein operates within bacterial outer membrane biogenesis; lipopolysaccharide biosynthesis. Activates KDO (a required 8-carbon sugar) for incorporation into bacterial lipopolysaccharide in Gram-negative bacteria. This Bradyrhizobium sp. (strain BTAi1 / ATCC BAA-1182) protein is 3-deoxy-manno-octulosonate cytidylyltransferase.